The following is a 1217-amino-acid chain: Splicing factor 3B subunit 3 (1217 aa).

2 interaction with PHF5A, SF3B1 and SF3B5 regions span residues 105 to 119 (ETFG…VPGQ) and 145 to 168 (NRDA…TLVY). A Phosphoserine modification is found at S156. 2 interaction with SF3B1 and SF3B5 regions span residues 193-231 (DNDP…LEEH) and 786-804 (RKFV…ETDH). The interval 1028 to 1049 (TYPRWVTTASLLDYDTVAGADK) is interaction with SF3B1. An interaction with SF3B5 region spans residues 1100-1123 (TVLSLQKTTLIPGGSESLVYTTLS). T1200 is subject to Phosphothreonine.

This sequence belongs to the RSE1 family. In terms of assembly, component of the 17S U2 SnRNP complex, a ribonucleoprotein complex that contains small nuclear RNA (snRNA) U2 and a number of specific proteins. Part of the SF3B subcomplex of the 17S U2 SnRNP complex. SF3B associates with the splicing subcomplex SF3A and a 12S RNA unit to form the U2 small nuclear ribonucleoproteins complex (U2 snRNP). Within the SF3B subcomplex, interacts directly with SF3B1 (via HEAT domain), SF3B5 and PHF5A. Identified in the spliceosome A complex; remains associated with the spliceosome throughout the splicing process. Component of the spliceosome B complex. Identified in the spliceosome C complex. Identified in the spliceosome E complex. Component of the minor (U12-type spliceosome) spliceosome. Within this complex, interacts with SCNM1. Associates with the STAGA transcription coactivator-HAT complex. Interacts with SUPT3H. Interacts with TAF3.

The protein localises to the nucleus. In terms of biological role, component of the 17S U2 SnRNP complex of the spliceosome, a large ribonucleoprotein complex that removes introns from transcribed pre-mRNAs. The 17S U2 SnRNP complex (1) directly participates in early spliceosome assembly and (2) mediates recognition of the intron branch site during pre-mRNA splicing by promoting the selection of the pre-mRNA branch-site adenosine, the nucleophile for the first step of splicing. Within the 17S U2 SnRNP complex, SF3B3 is part of the SF3B subcomplex, which is required for 'A' complex assembly formed by the stable binding of U2 snRNP to the branchpoint sequence in pre-mRNA. Sequence independent binding of SF3A and SF3B subcomplexes upstream of the branch site is essential, it may anchor U2 snRNP to the pre-mRNA. May also be involved in the assembly of the 'E' complex. Also acts as a component of the minor spliceosome, which is involved in the splicing of U12-type introns in pre-mRNAs. The protein is Splicing factor 3B subunit 3 (SF3B3) of Pongo abelii (Sumatran orangutan).